The sequence spans 37 residues: Large ribosomal subunit protein bL36 (37 aa).

Belongs to the bacterial ribosomal protein bL36 family.

The sequence is that of Large ribosomal subunit protein bL36 from Bordetella bronchiseptica (strain ATCC BAA-588 / NCTC 13252 / RB50) (Alcaligenes bronchisepticus).